The following is a 657-amino-acid chain: Threonine--tRNA ligase (657 aa).

One can recognise a TGS domain in the interval 1-70 (MSDHKESTGA…NSDAAIEIIT (70 aa)). Positions 253–555 (DHRKLGAELE…LIEHTAGNFP (303 aa)) are catalytic. Positions 351, 402, and 532 each coordinate Zn(2+).

Belongs to the class-II aminoacyl-tRNA synthetase family. Homodimer. Zn(2+) serves as cofactor.

The protein resides in the cytoplasm. It catalyses the reaction tRNA(Thr) + L-threonine + ATP = L-threonyl-tRNA(Thr) + AMP + diphosphate + H(+). In terms of biological role, catalyzes the attachment of threonine to tRNA(Thr) in a two-step reaction: L-threonine is first activated by ATP to form Thr-AMP and then transferred to the acceptor end of tRNA(Thr). Also edits incorrectly charged L-seryl-tRNA(Thr). This Chlorobium chlorochromatii (strain CaD3) protein is Threonine--tRNA ligase.